Here is a 360-residue protein sequence, read N- to C-terminus: Phosphoserine aminotransferase (360 aa).

An L-glutamate-binding site is contributed by Arg-41. 4 residues coordinate pyridoxal 5'-phosphate: Trp-101, Thr-152, Asp-172, and Gln-195. The residue at position 196 (Lys-196) is an N6-(pyridoxal phosphate)lysine. 237 to 238 (NT) provides a ligand contact to pyridoxal 5'-phosphate.

Belongs to the class-V pyridoxal-phosphate-dependent aminotransferase family. SerC subfamily. As to quaternary structure, homodimer. Pyridoxal 5'-phosphate serves as cofactor.

It is found in the cytoplasm. It carries out the reaction O-phospho-L-serine + 2-oxoglutarate = 3-phosphooxypyruvate + L-glutamate. The enzyme catalyses 4-(phosphooxy)-L-threonine + 2-oxoglutarate = (R)-3-hydroxy-2-oxo-4-phosphooxybutanoate + L-glutamate. The protein operates within amino-acid biosynthesis; L-serine biosynthesis; L-serine from 3-phospho-D-glycerate: step 2/3. It participates in cofactor biosynthesis; pyridoxine 5'-phosphate biosynthesis; pyridoxine 5'-phosphate from D-erythrose 4-phosphate: step 3/5. Its function is as follows. Catalyzes the reversible conversion of 3-phosphohydroxypyruvate to phosphoserine and of 3-hydroxy-2-oxo-4-phosphonooxybutanoate to phosphohydroxythreonine. In Burkholderia cenocepacia (strain ATCC BAA-245 / DSM 16553 / LMG 16656 / NCTC 13227 / J2315 / CF5610) (Burkholderia cepacia (strain J2315)), this protein is Phosphoserine aminotransferase.